Consider the following 144-residue polypeptide: MTSTVQSVQTFGRKKTATAVAHCKKGQGLIKVNGRPLEFLEPQILRIKLQEPLLLVGKERFQDVDIRIRVSGGGHVAQIYAVRQALAKALVAYYHKYVDEQSKRELKNIFAAYDKSLLVADPRRRESKKFGGPGARARYQKSYR.

Residue threonine 2 is modified to N-acetylthreonine. Positions 124–144 (RRESKKFGGPGARARYQKSYR) are disordered.

It belongs to the universal ribosomal protein uS9 family.

This is Small ribosomal subunit protein uS9 (rps-16) from Caenorhabditis elegans.